Here is a 123-residue protein sequence, read N- to C-terminus: KxDL motif-containing protein LO9-177 (123 aa).

The KxDL signature appears at 78-81; sequence KDDL.

Belongs to the KXD1 family. As to quaternary structure, homodimer. Component of a nuclear cell elongation controlling complex made of ILI5/BUL1, LO9-177 and BC1. Binds directly to ILI5/BUL1, ILI4/BU1, BUL2 and BUL3. Binds to BC1 in the nucleus. Interacts with BCL1.

Its subcellular location is the nucleus. The protein resides in the cytoplasm. Its function is as follows. Contributes, together with ILI5/BUL1 and BC1, to the promotion of leaf inclination and grain size by modulating cell elongation. This is KxDL motif-containing protein LO9-177 from Oryza sativa subsp. indica (Rice).